A 207-amino-acid polypeptide reads, in one-letter code: Ribosome maturation factor RimM (207 aa).

A PRC barrel domain is found at 130-207 (EDEFYWVDLI…RIVVDWGLDY (78 aa)).

This sequence belongs to the RimM family. In terms of assembly, binds ribosomal protein uS19.

It localises to the cytoplasm. Functionally, an accessory protein needed during the final step in the assembly of 30S ribosomal subunit, possibly for assembly of the head region. Essential for efficient processing of 16S rRNA. May be needed both before and after RbfA during the maturation of 16S rRNA. It has affinity for free ribosomal 30S subunits but not for 70S ribosomes. This chain is Ribosome maturation factor RimM, found in Cupriavidus taiwanensis (strain DSM 17343 / BCRC 17206 / CCUG 44338 / CIP 107171 / LMG 19424 / R1) (Ralstonia taiwanensis (strain LMG 19424)).